We begin with the raw amino-acid sequence, 131 residues long: Profilin-8 (131 aa).

A disulfide bridge connects residues Cys13 and Cys115. The Involved in PIP2 interaction motif lies at Ala81–Thr97. A Phosphothreonine modification is found at Thr111.

This sequence belongs to the profilin family. As to quaternary structure, occurs in many kinds of cells as a complex with monomeric actin in a 1:1 ratio. Phosphorylated by MAP kinases.

Its subcellular location is the cytoplasm. It is found in the cytoskeleton. In terms of biological role, binds to actin and affects the structure of the cytoskeleton. At high concentrations, profilin prevents the polymerization of actin, whereas it enhances it at low concentrations. The polypeptide is Profilin-8 (Zea mays (Maize)).